A 54-amino-acid polypeptide reads, in one-letter code: SPbeta prophage-derived uncharacterized protein YoqE (54 aa).

In Bacillus subtilis (strain 168), this protein is SPbeta prophage-derived uncharacterized protein YoqE (yoqE).